The sequence spans 279 residues: 3-methyl-2-oxobutanoate hydroxymethyltransferase (279 aa).

Mg(2+)-binding residues include D43 and D82. Residues D43–S44, D82, and K112 each bind 3-methyl-2-oxobutanoate. E114 is a Mg(2+) binding site. Catalysis depends on E181, which acts as the Proton acceptor.

This sequence belongs to the PanB family. As to quaternary structure, homodecamer; pentamer of dimers. The cofactor is Mg(2+).

The protein localises to the cytoplasm. The enzyme catalyses 3-methyl-2-oxobutanoate + (6R)-5,10-methylene-5,6,7,8-tetrahydrofolate + H2O = 2-dehydropantoate + (6S)-5,6,7,8-tetrahydrofolate. It functions in the pathway cofactor biosynthesis; (R)-pantothenate biosynthesis; (R)-pantoate from 3-methyl-2-oxobutanoate: step 1/2. Catalyzes the reversible reaction in which hydroxymethyl group from 5,10-methylenetetrahydrofolate is transferred onto alpha-ketoisovalerate to form ketopantoate. The polypeptide is 3-methyl-2-oxobutanoate hydroxymethyltransferase (Exiguobacterium sibiricum (strain DSM 17290 / CCUG 55495 / CIP 109462 / JCM 13490 / 255-15)).